Reading from the N-terminus, the 142-residue chain is Transcriptional regulator MraZ (142 aa).

SpoVT-AbrB domains are found at residues 5-51 (ASAL…PRPE) and 77-120 (AMDV…DSQT).

This sequence belongs to the MraZ family. In terms of assembly, forms oligomers.

It is found in the cytoplasm. The protein localises to the nucleoid. This is Transcriptional regulator MraZ from Burkholderia ambifaria (strain MC40-6).